The primary structure comprises 217 residues: RING-H2 finger protein ATL70 (217 aa).

Residues 61–81 form a helical membrane-spanning segment; sequence IGGFRYGIGVSIGVLLLITTI. The segment at 147 to 189 adopts an RING-type; atypical zinc-finger fold; that stretch reads CAICLGDYKGKHLLRQLPDCNHLFHLKCIDTWLRLNPTCPVCR.

This sequence belongs to the RING-type zinc finger family. ATL subfamily.

It localises to the membrane. The enzyme catalyses S-ubiquitinyl-[E2 ubiquitin-conjugating enzyme]-L-cysteine + [acceptor protein]-L-lysine = [E2 ubiquitin-conjugating enzyme]-L-cysteine + N(6)-ubiquitinyl-[acceptor protein]-L-lysine.. It participates in protein modification; protein ubiquitination. The protein is RING-H2 finger protein ATL70 (ATL70) of Arabidopsis thaliana (Mouse-ear cress).